Consider the following 491-residue polypeptide: Ketol-acid reductoisomerase (NADP(+)) (491 aa).

The region spanning 15-208 (AQLGKCRFMG…GGHRAGVLES (194 aa)) is the KARI N-terminal Rossmann domain. Residues 45-48 (CGAQ), Arg68, Arg76, Ser78, and 108-110 (DKQ) each bind NADP(+). His132 is an active-site residue. Gly158 is a binding site for NADP(+). KARI C-terminal knotted domains lie at 209-344 (SFVA…TAPQ) and 345-484 (YEGK…MTDM). 4 residues coordinate Mg(2+): Asp217, Glu221, Glu389, and Glu393. Ser414 is a substrate binding site.

Belongs to the ketol-acid reductoisomerase family. Mg(2+) is required as a cofactor.

The catalysed reaction is (2R)-2,3-dihydroxy-3-methylbutanoate + NADP(+) = (2S)-2-acetolactate + NADPH + H(+). It catalyses the reaction (2R,3R)-2,3-dihydroxy-3-methylpentanoate + NADP(+) = (S)-2-ethyl-2-hydroxy-3-oxobutanoate + NADPH + H(+). The protein operates within amino-acid biosynthesis; L-isoleucine biosynthesis; L-isoleucine from 2-oxobutanoate: step 2/4. Its pathway is amino-acid biosynthesis; L-valine biosynthesis; L-valine from pyruvate: step 2/4. In terms of biological role, involved in the biosynthesis of branched-chain amino acids (BCAA). Catalyzes an alkyl-migration followed by a ketol-acid reduction of (S)-2-acetolactate (S2AL) to yield (R)-2,3-dihydroxy-isovalerate. In the isomerase reaction, S2AL is rearranged via a Mg-dependent methyl migration to produce 3-hydroxy-3-methyl-2-ketobutyrate (HMKB). In the reductase reaction, this 2-ketoacid undergoes a metal-dependent reduction by NADPH to yield (R)-2,3-dihydroxy-isovalerate. The sequence is that of Ketol-acid reductoisomerase (NADP(+)) from Salmonella arizonae (strain ATCC BAA-731 / CDC346-86 / RSK2980).